The sequence spans 233 residues: Leucyl/phenylalanyl-tRNA--protein transferase (233 aa).

It belongs to the L/F-transferase family.

Its subcellular location is the cytoplasm. It carries out the reaction N-terminal L-lysyl-[protein] + L-leucyl-tRNA(Leu) = N-terminal L-leucyl-L-lysyl-[protein] + tRNA(Leu) + H(+). The enzyme catalyses N-terminal L-arginyl-[protein] + L-leucyl-tRNA(Leu) = N-terminal L-leucyl-L-arginyl-[protein] + tRNA(Leu) + H(+). The catalysed reaction is L-phenylalanyl-tRNA(Phe) + an N-terminal L-alpha-aminoacyl-[protein] = an N-terminal L-phenylalanyl-L-alpha-aminoacyl-[protein] + tRNA(Phe). Functionally, functions in the N-end rule pathway of protein degradation where it conjugates Leu, Phe and, less efficiently, Met from aminoacyl-tRNAs to the N-termini of proteins containing an N-terminal arginine or lysine. This chain is Leucyl/phenylalanyl-tRNA--protein transferase, found in Chromobacterium violaceum (strain ATCC 12472 / DSM 30191 / JCM 1249 / CCUG 213 / NBRC 12614 / NCIMB 9131 / NCTC 9757 / MK).